The chain runs to 204 residues: Pyridoxamine 5'-phosphate oxidase YLR456W homolog (204 aa).

FMN-binding positions include 65–66 (FT) and N127.

The protein belongs to the pyridoxamine 5'-phosphate oxidase family. The cofactor is FMN.

The protein localises to the cytoplasm. It localises to the nucleus. The polypeptide is Pyridoxamine 5'-phosphate oxidase YLR456W homolog (Saccharomyces cerevisiae (strain ATCC 204508 / S288c) (Baker's yeast)).